A 153-amino-acid chain; its full sequence is Transcriptional repressor NrdR (153 aa).

A zinc finger spans residues 3-34 (CPFCGYEDSKVVDTRPTNEGKTIKRRRECLKC). One can recognise an ATP-cone domain in the interval 49 to 139 (ILVIKKDNRR…VYRQFKDINT (91 aa)).

The protein belongs to the NrdR family. It depends on Zn(2+) as a cofactor.

Its function is as follows. Negatively regulates transcription of bacterial ribonucleotide reductase nrd genes and operons by binding to NrdR-boxes. This is Transcriptional repressor NrdR from Caldicellulosiruptor bescii (strain ATCC BAA-1888 / DSM 6725 / KCTC 15123 / Z-1320) (Anaerocellum thermophilum).